Consider the following 290-residue polypeptide: Prepilin leader peptidase/N-methyltransferase (290 aa).

Residues 13 to 33 (AFVLCTILLGLLVGSFLNVVV) traverse the membrane as a helical segment. Residues C72, C75, C97, and C100 each coordinate Zn(2+). A run of 5 helical transmembrane segments spans residues 128–148 (FTWQ…MSLI), 158–178 (VLVL…LFAS), 183–203 (LFGA…FKLV), 228–248 (ILPL…VIML), and 261–276 (FGPY…LLWG).

It belongs to the peptidase A24 family. Zn(2+) is required as a cofactor.

The protein resides in the cell inner membrane. The enzyme catalyses Typically cleaves a -Gly-|-Phe- bond to release an N-terminal, basic peptide of 5-8 residues from type IV prepilin, and then N-methylates the new N-terminal amino group, the methyl donor being S-adenosyl-L-methionine.. Functionally, plays an essential role in type IV pili and type II pseudopili formation by proteolytically removing the leader sequence from substrate proteins and subsequently monomethylating the alpha-amino group of the newly exposed N-terminal phenylalanine. Substrates include proteins required for pilus biogenesis PilE, PilV, PilW, and PilX as well as some components of the type II general secretory apparatus GspG, GspH, GspI and GspJ. This chain is Prepilin leader peptidase/N-methyltransferase (pilD), found in Pseudomonas aeruginosa (strain ATCC 15692 / DSM 22644 / CIP 104116 / JCM 14847 / LMG 12228 / 1C / PRS 101 / PAO1).